The sequence spans 229 residues: Phosphoglycolate phosphatase (229 aa).

D18 functions as the Nucleophile in the catalytic mechanism. Mg(2+) contacts are provided by D18, D20, and D176.

It belongs to the HAD-like hydrolase superfamily. CbbY/CbbZ/Gph/YieH family. The cofactor is Mg(2+).

It carries out the reaction 2-phosphoglycolate + H2O = glycolate + phosphate. Its pathway is organic acid metabolism; glycolate biosynthesis; glycolate from 2-phosphoglycolate: step 1/1. Specifically catalyzes the dephosphorylation of 2-phosphoglycolate. Is involved in the dissimilation of the intracellular 2-phosphoglycolate formed during the DNA repair of 3'-phosphoglycolate ends, a major class of DNA lesions induced by oxidative stress. This is Phosphoglycolate phosphatase from Xylella fastidiosa (strain 9a5c).